A 148-amino-acid chain; its full sequence is Transcription antitermination protein NusB (148 aa).

The protein belongs to the NusB family.

Functionally, involved in transcription antitermination. Required for transcription of ribosomal RNA (rRNA) genes. Binds specifically to the boxA antiterminator sequence of the ribosomal RNA (rrn) operons. This chain is Transcription antitermination protein NusB, found in Saccharopolyspora erythraea (strain ATCC 11635 / DSM 40517 / JCM 4748 / NBRC 13426 / NCIMB 8594 / NRRL 2338).